The primary structure comprises 38 residues: MTEPNPNKQEVELNRTSLYWGLLLIFVLAILFSSYIFN.

Residues 17–37 (SLYWGLLLIFVLAILFSSYIF) traverse the membrane as a helical segment.

The protein belongs to the PsbL family. PSII is composed of 1 copy each of membrane proteins PsbA, PsbB, PsbC, PsbD, PsbE, PsbF, PsbH, PsbI, PsbJ, PsbK, PsbL, PsbM, PsbT, PsbX, PsbY, PsbZ, Psb30/Ycf12, at least 3 peripheral proteins of the oxygen-evolving complex and a large number of cofactors. It forms dimeric complexes.

The protein localises to the plastid. Its subcellular location is the chloroplast thylakoid membrane. Functionally, one of the components of the core complex of photosystem II (PSII). PSII is a light-driven water:plastoquinone oxidoreductase that uses light energy to abstract electrons from H(2)O, generating O(2) and a proton gradient subsequently used for ATP formation. It consists of a core antenna complex that captures photons, and an electron transfer chain that converts photonic excitation into a charge separation. This subunit is found at the monomer-monomer interface and is required for correct PSII assembly and/or dimerization. This Mesostigma viride (Green alga) protein is Photosystem II reaction center protein L.